We begin with the raw amino-acid sequence, 733 residues long: 2'-5'-oligoadenylate synthase 2 (733 aa).

The N-myristoyl glycine moiety is linked to residue glycine 2. OAS domain regions lie at residues 47 to 365 (VPSQ…CWDV) and 373 to 713 (TPSH…WKVP). Residue lysine 408 is modified to N6-acetyllysine. Position 427 (serine 427) interacts with ATP. Positions 439, 441, and 510 each coordinate Mg(2+). ATP contacts are provided by arginine 574 and lysine 577.

This sequence belongs to the 2-5A synthase family. As to quaternary structure, homodimer. Requires Mg(2+) as cofactor. Post-translationally, myristoylation is not essential for its activity. Glycosylated. Glycosylation is essential for its activity.

The protein localises to the cytoplasm. It localises to the perinuclear region. It catalyses the reaction 3 ATP = 5'-triphosphoadenylyl-(2'-&gt;5')-adenylyl-(2'-&gt;5')-adenosine + 2 diphosphate. Its activity is regulated as follows. Produced as a latent enzyme which is activated by double stranded RNA (dsRNA) generated during the course of viral infection. The dsRNA activator must be at least 15 nucleotides long, and no modification of the 2'-hydroxyl group is tolerated. ssRNA or dsDNA do not act as activators. Strongly inhibited by copper, iron and zinc ions. Partially inhibited by cobalt and nickel ions. Interferon-induced, dsRNA-activated antiviral enzyme which plays a critical role in cellular innate antiviral response. Activated by detection of double stranded RNA (dsRNA): polymerizes higher oligomers of 2'-5'-oligoadenylates (2-5A) from ATP which then bind to the inactive monomeric form of ribonuclease L (RNASEL) leading to its dimerization and subsequent activation. Activation of RNASEL leads to degradation of cellular as well as viral RNA, resulting in the inhibition of protein synthesis, thus terminating viral replication. Can mediate the antiviral effect via the classical RNASEL-dependent pathway or an alternative antiviral pathway independent of RNASEL. In addition, it may also play a role in other cellular processes such as apoptosis, cell growth, differentiation and gene regulation. May act as a negative regulator of lactation, stopping lactation in virally infected mammary gland lobules, thereby preventing transmission of viruses to neonates. Non-infected lobules would not be affected, allowing efficient pup feeding during infection. The polypeptide is 2'-5'-oligoadenylate synthase 2 (Oas2) (Rattus norvegicus (Rat)).